Reading from the N-terminus, the 173-residue chain is Mesencephalic astrocyte-derived neurotrophic factor homolog (173 aa).

The N-terminal stretch at 1–22 (MKTAHLVVVVCFLAGALQTAVA) is a signal peptide. Cystine bridges form between Cys-28–Cys-114, Cys-31–Cys-103, Cys-61–Cys-72, and Cys-148–Cys-151.

Belongs to the ARMET family.

It localises to the secreted. Required during the maturation of the embryonic nervous system for maintenance of neuronal and cuticular connectivity. Essential for maintenance of dopaminergic neurons and dopamine levels. This Drosophila ananassae (Fruit fly) protein is Mesencephalic astrocyte-derived neurotrophic factor homolog.